The following is a 484-amino-acid chain: Cysteine--tRNA ligase (484 aa).

A Zn(2+)-binding site is contributed by Cys27. The 'HIGH' region motif lies at 29 to 39 (PTTYNYIHLGN). Residues Cys207, His232, and Glu236 each contribute to the Zn(2+) site. Residues 264–268 (KMSKS) carry the 'KMSKS' region motif. Lys267 provides a ligand contact to ATP.

The protein belongs to the class-I aminoacyl-tRNA synthetase family. As to quaternary structure, monomer. It depends on Zn(2+) as a cofactor.

The protein resides in the cytoplasm. The catalysed reaction is tRNA(Cys) + L-cysteine + ATP = L-cysteinyl-tRNA(Cys) + AMP + diphosphate. This is Cysteine--tRNA ligase from Pelotomaculum thermopropionicum (strain DSM 13744 / JCM 10971 / SI).